Consider the following 296-residue polypeptide: Ribonuclease MRP protein subunit POP4 (296 aa).

Disordered stretches follow at residues 29–74 and 148–173; these read LLQQ…VDPK and SASG…KRLK. The span at 36–56 shows a compositional bias: basic and acidic residues; the sequence is KNEKDKKGTSDVDVSMKESHQ. A compositionally biased stretch (polar residues) spans 57–66; it reads ADSLPTPSKT. Residues 160–167 carry the Nuclear localization signal motif; the sequence is SKRSKSRM. Residues 163-173 are compositionally biased toward basic residues; that stretch reads SKSRMSMKRLK.

This sequence belongs to the eukaryotic/archaeal RNase P protein component 1 family. Component of nuclear RNase MRP complexes. Several subunits of RNase P are also part of the RNase MRP complex. RNase MRP consists of a catalytic RNA moiety and several protein subunits.

It localises to the nucleus. Its function is as follows. Component of the MRP ribonuclease complex, which cleaves pre-rRNA sequences. Required for rRNA maturation, including 5.8S rRNA processing. Seems not involved in tRNA maturation. The protein is Ribonuclease MRP protein subunit POP4 of Arabidopsis thaliana (Mouse-ear cress).